Here is a 124-residue protein sequence, read N- to C-terminus: Phosphoribosyl-ATP pyrophosphatase (124 aa).

This sequence belongs to the PRA-PH family.

Its subcellular location is the cytoplasm. It carries out the reaction 1-(5-phospho-beta-D-ribosyl)-ATP + H2O = 1-(5-phospho-beta-D-ribosyl)-5'-AMP + diphosphate + H(+). Its pathway is amino-acid biosynthesis; L-histidine biosynthesis; L-histidine from 5-phospho-alpha-D-ribose 1-diphosphate: step 2/9. This chain is Phosphoribosyl-ATP pyrophosphatase, found in Ralstonia pickettii (strain 12J).